The sequence spans 429 residues: Ribosomal RNA small subunit methyltransferase B (429 aa).

S-adenosyl-L-methionine is bound by residues 254 to 260, Asp-277, Asp-303, and Asp-322; that span reads CAAPGGK. Cys-375 serves as the catalytic Nucleophile. The disordered stretch occupies residues 397–419; the sequence is ALSETGTPDQPGQQNLPGGEEGD. A compositionally biased stretch (polar residues) spans 400–412; sequence ETGTPDQPGQQNL.

The protein belongs to the class I-like SAM-binding methyltransferase superfamily. RsmB/NOP family.

The protein resides in the cytoplasm. The enzyme catalyses cytidine(967) in 16S rRNA + S-adenosyl-L-methionine = 5-methylcytidine(967) in 16S rRNA + S-adenosyl-L-homocysteine + H(+). In terms of biological role, specifically methylates the cytosine at position 967 (m5C967) of 16S rRNA. This chain is Ribosomal RNA small subunit methyltransferase B, found in Salmonella paratyphi B (strain ATCC BAA-1250 / SPB7).